A 252-amino-acid chain; its full sequence is T-box transcription factor mls-1 (252 aa).

A DNA-binding region (T-box) is located at residues 40–210 (LWRRFHNLGT…SNPFAKGFRE (171 aa)).

As to quaternary structure, may interact with unc-37.

Its subcellular location is the nucleus. Functionally, probable transcription factor required for the cell fate specification of non-striated uterine muscle precursor cells. Furthermore, may function with the transcriptional corepressor unc-37. In Caenorhabditis elegans, this protein is T-box transcription factor mls-1.